Here is a 238-residue protein sequence, read N- to C-terminus: MEATQFQTMLEERGILLSSRALAQFERYYELLVEWNEKMNLTAITDKPGVYVKHFFDSVSPAFYYDFSAPLALCDVGSGAGFPSLPLKICFPHLRVSIVDSLQKRIRFLEHLITELGLADVALYHERAETFARQKGMRESFDVVTARAVARMPVLVELCLPLVKMGGTFIAMKAASALEELKEGNKAISVLGGEVTATETFTLPFDEGERTIIFIQKMRKTPNQYPRKPGTPNKQPIQ.

S-adenosyl-L-methionine is bound by residues glycine 77, phenylalanine 82, alanine 128–glutamate 129, and arginine 147.

It belongs to the methyltransferase superfamily. RNA methyltransferase RsmG family.

The protein localises to the cytoplasm. Functionally, specifically methylates the N7 position of guanine in position 535 of 16S rRNA. In Geobacillus kaustophilus (strain HTA426), this protein is Ribosomal RNA small subunit methyltransferase G.